The primary structure comprises 176 residues: Ribosome rescue factor SmrB (176 aa).

Positions 97–172 (LDMHGMTQQE…GDGALLVLLS (76 aa)) constitute a Smr domain.

This sequence belongs to the SmrB family. In terms of assembly, associates with collided ribosomes, but not with correctly translating polysomes.

Its function is as follows. Acts as a ribosome collision sensor. Detects stalled/collided disomes (pairs of ribosomes where the leading ribosome is stalled and a second ribosome has collided with it) and endonucleolytically cleaves mRNA at the 5' boundary of the stalled ribosome. Stalled/collided disomes form a new interface (primarily via the 30S subunits) that binds SmrB. Cleaved mRNA becomes available for tmRNA ligation, leading to ribosomal subunit dissociation and rescue of stalled ribosomes. This Vibrio vulnificus (strain YJ016) protein is Ribosome rescue factor SmrB.